The chain runs to 544 residues: Chaperonin GroEL (544 aa).

Residues 29–32 (TLGP), lysine 50, 86–90 (DGTTT), glycine 415, and aspartate 495 contribute to the ATP site.

The protein belongs to the chaperonin (HSP60) family. Forms a cylinder of 14 subunits composed of two heptameric rings stacked back-to-back. Interacts with the co-chaperonin GroES.

It is found in the cytoplasm. The catalysed reaction is ATP + H2O + a folded polypeptide = ADP + phosphate + an unfolded polypeptide.. Its function is as follows. Together with its co-chaperonin GroES, plays an essential role in assisting protein folding. The GroEL-GroES system forms a nano-cage that allows encapsulation of the non-native substrate proteins and provides a physical environment optimized to promote and accelerate protein folding. The protein is Chaperonin GroEL of Tannerella forsythia (Bacteroides forsythus).